An 837-amino-acid polypeptide reads, in one-letter code: Protein translocase subunit SecA (837 aa).

Residues Gln85, 103-107 (GEGKT), and Asp493 each bind ATP. Residues Cys821, Cys823, Cys832, and His833 each coordinate Zn(2+).

The protein belongs to the SecA family. In terms of assembly, monomer and homodimer. Part of the essential Sec protein translocation apparatus which comprises SecA, SecYEG and auxiliary proteins SecDF. Other proteins may also be involved. Zn(2+) serves as cofactor.

The protein localises to the cell membrane. Its subcellular location is the cytoplasm. It carries out the reaction ATP + H2O + cellular proteinSide 1 = ADP + phosphate + cellular proteinSide 2.. Its function is as follows. Part of the Sec protein translocase complex. Interacts with the SecYEG preprotein conducting channel. Has a central role in coupling the hydrolysis of ATP to the transfer of proteins into and across the cell membrane, serving as an ATP-driven molecular motor driving the stepwise translocation of polypeptide chains across the membrane. The polypeptide is Protein translocase subunit SecA (Streptococcus pneumoniae (strain ATCC BAA-255 / R6)).